The chain runs to 243 residues: uncharacterized protein (243 aa).

This is an uncharacterized protein from Methanocaldococcus jannaschii (strain ATCC 43067 / DSM 2661 / JAL-1 / JCM 10045 / NBRC 100440) (Methanococcus jannaschii).